The sequence spans 746 residues: Ring assembly protein 3 (746 aa).

It is found in the cytoplasm. In terms of biological role, essential for actinomyosin ring assembly during cytokinesis. Has a role, in conjunction with F-actin, in assembling myosin II-containing proteins, such as myo2, at the division site. This chain is Ring assembly protein 3 (rng3), found in Schizosaccharomyces pombe (strain 972 / ATCC 24843) (Fission yeast).